The sequence spans 228 residues: Large ribosomal subunit protein uL3 (228 aa).

Q151 is subject to N5-methylglutamine.

This sequence belongs to the universal ribosomal protein uL3 family. In terms of assembly, part of the 50S ribosomal subunit. Forms a cluster with proteins L14 and L19. In terms of processing, methylated by PrmB.

Functionally, one of the primary rRNA binding proteins, it binds directly near the 3'-end of the 23S rRNA, where it nucleates assembly of the 50S subunit. The protein is Large ribosomal subunit protein uL3 of Rhizobium meliloti (strain 1021) (Ensifer meliloti).